Consider the following 514-residue polypeptide: MGNKSLAEKIAELSKPSTEFDIEDNDLRDNVFDHNGDDDHSNSDSSDDETLKKQHYLAVDKSNIRNENGNLNLGKAYGGKVTSRGDLYESDEESRSLDEHENSEDSDSGISLKTNSESESEDDDEDESESEDKDEVTKEEDSNLTHKRSKLKELMSNERQHIVNRLSQSASNDAVKGFAILQQHKLFDSIIDSRMKVQKSLTNSNVLPIKRDILKGHFATKKTDKYLNQTSEKCFDLLDSILALRSKLLKKDSVLSSSESPKSFNPKKRTLTDYLEATGKQDTVLERYRSSVLSKWSSKIHNAAGSTAISSGKFKAINQSAEQQVINNLSDMDRLIKRTKLNRRQVKPLGYEYHTSQSDITEQGSIDDQNQDIPNENKQTNKSDLSELASIFDDEDFYRVLLNDLVDKKIQSSDPASGLTVSLRSVQQAQKFKKNIDTKASKGRKLRYHIQEQIANFEAPRGGWKWDDNQIDEFFASLLGQKVNMNEVDEDEDHNNDDDEEIVINSNDSFKLFG.

Disordered regions lie at residues 14–153 (SKPS…KLKE) and 353–382 (YHTSQSDITEQGSIDDQNQDIPNENKQTNK). Residues 25 to 42 (NDLRDNVFDHNGDDDHSN) show a composition bias toward basic and acidic residues. Acidic residues predominate over residues 118-134 (SESEDDDEDESESEDKD). The segment covering 135-144 (EVTKEEDSNL) has biased composition (basic and acidic residues). Positions 354–378 (HTSQSDITEQGSIDDQNQDIPNENK) are enriched in polar residues.

Belongs to the AATF family.

It is found in the nucleus. Its subcellular location is the nucleolus. This is Protein BFR2 (BFR2) from Debaryomyces hansenii (strain ATCC 36239 / CBS 767 / BCRC 21394 / JCM 1990 / NBRC 0083 / IGC 2968) (Yeast).